The sequence spans 217 residues: 3-isopropylmalate dehydratase small subunit (217 aa).

This sequence belongs to the LeuD family. LeuD type 1 subfamily. In terms of assembly, heterodimer of LeuC and LeuD.

The enzyme catalyses (2R,3S)-3-isopropylmalate = (2S)-2-isopropylmalate. The protein operates within amino-acid biosynthesis; L-leucine biosynthesis; L-leucine from 3-methyl-2-oxobutanoate: step 2/4. In terms of biological role, catalyzes the isomerization between 2-isopropylmalate and 3-isopropylmalate, via the formation of 2-isopropylmaleate. This is 3-isopropylmalate dehydratase small subunit from Delftia acidovorans (strain DSM 14801 / SPH-1).